We begin with the raw amino-acid sequence, 662 residues long: Protein distal antenna (662 aa).

Residues 21-72 enclose the HTH psq-type domain; the sequence is TKGKRPLRHLTATDKIDAIQRIHDGESKASVARDIGVPESTLRGWCKNEEKL. Positions 48 to 68 form a DNA-binding region, H-T-H motif; it reads KASVARDIGVPESTLRGWCKN. 4 disordered regions span residues 265-299, 348-407, 491-537, and 558-596; these read RNAR…STPS, YSQM…PEDT, PEDL…DDEV, and QSSP…KSTC. Residues 349–391 show a composition bias toward low complexity; it reads SQMPRPSSPQQPQSTPPTTTTTQQQQPQSSTPPTATPPIVSTP. Positions 511-520 are enriched in polar residues; that stretch reads FNPSPSTSIK. A compositionally biased stretch (acidic residues) spans 527–536; sequence VDEDEDEDDE.

As to quaternary structure, homomers. Interacts with itself, danr, ey and dac to form a complex (or complexes) containing the RD factors.

It localises to the nucleus. In terms of biological role, probable transcription factor with a role in the retinal determination (RD) network. Contributes to differentiation of antenna-specific characteristics. The protein is Protein distal antenna of Culex quinquefasciatus (Southern house mosquito).